We begin with the raw amino-acid sequence, 346 residues long: S-adenosylmethionine:tRNA ribosyltransferase-isomerase (346 aa).

The protein belongs to the QueA family. Monomer.

It localises to the cytoplasm. The enzyme catalyses 7-aminomethyl-7-carbaguanosine(34) in tRNA + S-adenosyl-L-methionine = epoxyqueuosine(34) in tRNA + adenine + L-methionine + 2 H(+). It participates in tRNA modification; tRNA-queuosine biosynthesis. Transfers and isomerizes the ribose moiety from AdoMet to the 7-aminomethyl group of 7-deazaguanine (preQ1-tRNA) to give epoxyqueuosine (oQ-tRNA). The protein is S-adenosylmethionine:tRNA ribosyltransferase-isomerase of Shewanella denitrificans (strain OS217 / ATCC BAA-1090 / DSM 15013).